The chain runs to 380 residues: Chromo domain-containing protein 2 (380 aa).

2 disordered regions span residues 14–58 (ISES…SLYG) and 100–156 (KLSP…VPLN). A compositionally biased stretch (polar residues) spans 33 to 52 (NSINNKSSTASLESPQNGSW). Positions 108 to 119 (EDSEDKKEEDES) are enriched in acidic residues. A compositionally biased stretch (low complexity) spans 121 to 140 (SYKNEFKSSSSASVSSNFEK). The Chromo domain occupies 176–238 (FAVEMILDSR…SRGGKPDLSS (63 aa)). Positions 250-273 (SNEASYVEKDESSNSDDSISYKRR) are disordered.

It is found in the nucleus. Its function is as follows. Component of the kinetochore which plays a role in stabilizing microtubules and so allowing accurate chromosome segregation. The chain is Chromo domain-containing protein 2 (chp2) from Schizosaccharomyces pombe (strain 972 / ATCC 24843) (Fission yeast).